A 137-amino-acid polypeptide reads, in one-letter code: Protein MesC (137 aa).

The protein is Protein MesC (mesC) of Leuconostoc mesenteroides.